Consider the following 434-residue polypeptide: Tryptamine hydroxycinnamoyltransferase 2 (434 aa).

Catalysis depends on proton acceptor residues His154 and Asp380.

Belongs to the plant acyltransferase family.

Its function is as follows. Hydroxycinnamoyl transferase that catalyzes the transfer of an acyl from p-coumaryol-CoA to tryptamine, to produce coumaroyl tryptamine. Serotonin and tyramine serve as acyl acceptors in vitro. Can use caffeoyl-CoA, and to a lesser extent feruloyl-CoA, as acyl donors. This is Tryptamine hydroxycinnamoyltransferase 2 from Oryza sativa subsp. japonica (Rice).